The sequence spans 297 residues: Acetyl-coenzyme A carboxylase carboxyl transferase subunit beta (297 aa).

The CoA carboxyltransferase N-terminal domain maps to 25–294 (LWVKCPETGQ…VPPKGRLPAP (270 aa)).

Belongs to the AccD/PCCB family. Acetyl-CoA carboxylase is a heterohexamer composed of biotin carboxyl carrier protein (AccB), biotin carboxylase (AccC) and two subunits each of ACCase subunit alpha (AccA) and ACCase subunit beta (AccD).

The protein resides in the cytoplasm. The catalysed reaction is N(6)-carboxybiotinyl-L-lysyl-[protein] + acetyl-CoA = N(6)-biotinyl-L-lysyl-[protein] + malonyl-CoA. It participates in lipid metabolism; malonyl-CoA biosynthesis; malonyl-CoA from acetyl-CoA: step 1/1. Functionally, component of the acetyl coenzyme A carboxylase (ACC) complex. Biotin carboxylase (BC) catalyzes the carboxylation of biotin on its carrier protein (BCCP) and then the CO(2) group is transferred by the transcarboxylase to acetyl-CoA to form malonyl-CoA. The polypeptide is Acetyl-coenzyme A carboxylase carboxyl transferase subunit beta (Azorhizobium caulinodans (strain ATCC 43989 / DSM 5975 / JCM 20966 / LMG 6465 / NBRC 14845 / NCIMB 13405 / ORS 571)).